Here is an 809-residue protein sequence, read N- to C-terminus: Pentatricopeptide repeat-containing protein At1g11290, chloroplastic (809 aa).

The transit peptide at 1 to 46 (MSSQLVQFSTVPQIPNPPSRHRHFLSERNYIPANVYEHPAALLLER) directs the protein to the chloroplast. 16 PPR repeats span residues 68 to 98 (EHFFQTKLVSLFCRYGSVDEAARVFEPIDSK), 99 to 133 (LNVLYHTMLKGFAKVSDLDKALQFFVRMRYDDVEP), 134 to 168 (VVYNFTYLLKVCGDEAELRVGKEIHGLLVKSGFSL), 169 to 199 (DLFAMTGLENMYAKCRQVNEARKVFDRMPER), 200 to 234 (DLVSWNTIVAGYSQNGMARMALEMVKSMCEENLKP), 235 to 269 (SFITIVSVLPAVSALRLISVGKEIHGYAMRSGFDS), 270 to 300 (LVNISTALVDMYAKCGSLETARQLFDGMLER), 301 to 335 (NVVSWNSMIDAYVQNENPKEAMLIFQKMLDEGVKP), 336 to 370 (TDVSVMGALHACADLGDLERGRFIHKLSVELGLDR), 371 to 401 (NVSVVNSLISMYCKCKEVDTAASMFGKLQSR), 402 to 436 (TLVSWNAMILGFAQNGRPIDALNYFSQMRSRTVKP), 437 to 471 (DTFTYVSVITAIAELSITHHAKWIHGVVMRSCLDK), 472 to 502 (NVFVTTALVDMYAKCGAIMIARLIFDMMSER), 503 to 537 (HVTTWNAMIDGYGTHGFGKAALELFEEMQKGTIKP), 538 to 568 (NGVTFLSVISACSHSGLVEAGLKCFYMMKEN), and 574 to 604 (SMDHYGAMVDLLGRAGRLNEAWDFIMQMPVK). Positions 609-684 (VYGAMLGACQ…TPGCSMVEIK (76 aa)) are type E motif. A type E(+) motif region spans residues 685–715 (NEVHSFFSGSTAHPDSKKIYAFLEKLICHIK). The interval 716–809 (EAGYVPDTNL…NGACSCGDYW (94 aa)) is type DYW motif.

Belongs to the PPR family. PCMP-H subfamily.

Its subcellular location is the plastid. It is found in the chloroplast. Its function is as follows. Involved in multiple sites RNA editing events in chloroplasts. Involved in the editing of the site 7 of ndhB (ndhB-7) and site 5 of ndhD (ndhD-5) transcripts, which are two plastid-encoded subunits of the chloroplast NAD(P)H dehydrogenase (NDH) complex. Involved in the editing of the site 3 of rpoB (rpoB-3) transcript. Required for the activity of the NDH complex of the photosynthetic electron transport chain. Possesses low endoribonuclease activity in vitro. The polypeptide is Pentatricopeptide repeat-containing protein At1g11290, chloroplastic (PCMP-H40) (Arabidopsis thaliana (Mouse-ear cress)).